The chain runs to 153 residues: Insulin-like growth factor 1 (153 aa).

Residues 49–77 (GPETLCGAELVDALQFVCGPRGFYFNKPT) form a b region. 3 cysteine pairs are disulfide-bonded: Cys-54/Cys-96, Cys-66/Cys-109, and Cys-95/Cys-100. The interval 78-89 (GYGSSIRRAPQT) is c. Positions 90–110 (GIVDECCFRSCDLRRLEMYCA) are a. Positions 111-118 (PLKPTKSA) are d. The propeptide at 119–153 (RSIRAQRHTDMPKTQKEVHLKNTSRGSAGNKTYRM) is e peptide. Residues 119-153 (RSIRAQRHTDMPKTQKEVHLKNTSRGSAGNKTYRM) form a disordered region. The segment covering 125–138 (RHTDMPKTQKEVHL) has biased composition (basic and acidic residues). Over residues 139–153 (KNTSRGSAGNKTYRM) the composition is skewed to polar residues.

The protein belongs to the insulin family. As to quaternary structure, forms a ternary complex with IGFR1 and ITGAV:ITGB3. Forms a ternary complex with IGFR1 and ITGA6:ITGB4. Forms a ternary complex with IGFBP3 and ALS.

Its subcellular location is the secreted. Its function is as follows. The insulin-like growth factors, isolated from plasma, are structurally and functionally related to insulin but have a much higher growth-promoting activity. May be a physiological regulator of [1-14C]-2-deoxy-D-glucose (2DG) transport and glycogen synthesis in osteoblasts. Stimulates glucose transport in bone-derived osteoblastic (PyMS) cells and is effective at much lower concentrations than insulin, not only regarding glycogen and DNA synthesis but also with regard to enhancing glucose uptake. May play a role in synapse maturation. Ca(2+)-dependent exocytosis of IGF1 is required for sensory perception of smell in the olfactory bulb. Acts as a ligand for IGF1R. Binds to the alpha subunit of IGF1R, leading to the activation of the intrinsic tyrosine kinase activity which autophosphorylates tyrosine residues in the beta subunit thus initiating a cascade of down-stream signaling events leading to activation of the PI3K-AKT/PKB and the Ras-MAPK pathways. Binds to integrins ITGAV:ITGB3 and ITGA6:ITGB4. Its binding to integrins and subsequent ternary complex formation with integrins and IGFR1 are essential for IGF1 signaling. Induces the phosphorylation and activation of IGFR1, MAPK3/ERK1, MAPK1/ERK2 and AKT1. As part of the MAPK/ERK signaling pathway, acts as a negative regulator of apoptosis in cardiomyocytes via promotion of STUB1/CHIP-mediated ubiquitination and degradation of ICER-type isoforms of CREM. The polypeptide is Insulin-like growth factor 1 (Rattus norvegicus (Rat)).